The primary structure comprises 173 residues: MTIILGIDPGSRITGYGVIRQQAGKVEYLGSGCIRTSGEQLSDKLKQIYDGISEIILQFKPDLFAIEQVFMAKNPDSALKLGQARGSAIVAAVNAGLPVAEYAARQVKQSVVGTGAADKEQVQHMVKQLLKLPACPQADAADALAVALCHSHTQQTLIRMAGKVHGTARGRLR.

Catalysis depends on residues Asp8, Glu67, and Asp139. 3 residues coordinate Mg(2+): Asp8, Glu67, and Asp139.

It belongs to the RuvC family. In terms of assembly, homodimer which binds Holliday junction (HJ) DNA. The HJ becomes 2-fold symmetrical on binding to RuvC with unstacked arms; it has a different conformation from HJ DNA in complex with RuvA. In the full resolvosome a probable DNA-RuvA(4)-RuvB(12)-RuvC(2) complex forms which resolves the HJ. Mg(2+) serves as cofactor.

It is found in the cytoplasm. It carries out the reaction Endonucleolytic cleavage at a junction such as a reciprocal single-stranded crossover between two homologous DNA duplexes (Holliday junction).. The RuvA-RuvB-RuvC complex processes Holliday junction (HJ) DNA during genetic recombination and DNA repair. Endonuclease that resolves HJ intermediates. Cleaves cruciform DNA by making single-stranded nicks across the HJ at symmetrical positions within the homologous arms, yielding a 5'-phosphate and a 3'-hydroxyl group; requires a central core of homology in the junction. The consensus cleavage sequence is 5'-(A/T)TT(C/G)-3'. Cleavage occurs on the 3'-side of the TT dinucleotide at the point of strand exchange. HJ branch migration catalyzed by RuvA-RuvB allows RuvC to scan DNA until it finds its consensus sequence, where it cleaves and resolves the cruciform DNA. This Tolumonas auensis (strain DSM 9187 / NBRC 110442 / TA 4) protein is Crossover junction endodeoxyribonuclease RuvC.